A 340-amino-acid chain; its full sequence is Phenylalanine--tRNA ligase alpha subunit (340 aa).

Glu-258 is a Mg(2+) binding site.

It belongs to the class-II aminoacyl-tRNA synthetase family. Phe-tRNA synthetase alpha subunit type 1 subfamily. Tetramer of two alpha and two beta subunits. It depends on Mg(2+) as a cofactor.

It is found in the cytoplasm. It carries out the reaction tRNA(Phe) + L-phenylalanine + ATP = L-phenylalanyl-tRNA(Phe) + AMP + diphosphate + H(+). This chain is Phenylalanine--tRNA ligase alpha subunit, found in Corynebacterium efficiens (strain DSM 44549 / YS-314 / AJ 12310 / JCM 11189 / NBRC 100395).